A 149-amino-acid chain; its full sequence is MYGKIIFVLLLSAIVSISASSTTEVAMHTSTSSVTKSYISSETSDKHKWDTYPATPRAHEVSEIYVTTVYPPEEENGEGVQLVHRFSEPEITLIIFGVMAGVIGTILLIYYSIRRLIKKSPSDVKPLPSPDTDVPLSSVEIENPETSDQ.

Positions 1-19 (MYGKIIFVLLLSAIVSISA) are cleaved as a signal peptide. The Extracellular portion of the chain corresponds to 20–90 (SSTTEVAMHT…QLVHRFSEPE (71 aa)). The O-linked (GalNAc...) serine glycan is linked to S21. Residues T22, T23, and T29 are each glycosylated (O-linked (GalNAc...) threonine). S30 carries an O-linked (GalNAc...) serine glycan. T31 carries O-linked (GalNAc...) threonine glycosylation. S32 carries O-linked (GalNAc...) serine glycosylation. The O-linked (GalNAc...) threonine glycan is linked to T35. Residues S37 and S40 are each glycosylated (O-linked (GalNAc...) serine). T43 is a glycosylation site (O-linked (GalNAc...) threonine). O-linked (GalNAc...) serine glycosylation occurs at S44. O-linked (GalNAc...) threonine glycosylation is found at T51 and T55. Residue S62 is glycosylated (O-linked (GalNAc...) serine). The O-linked (GalNAc...) threonine glycan is linked to T68. Residues 91-113 (ITLIIFGVMAGVIGTILLIYYSI) traverse the membrane as a helical segment. Residues 114–149 (RRLIKKSPSDVKPLPSPDTDVPLSSVEIENPETSDQ) lie on the Cytoplasmic side of the membrane. The tract at residues 122-149 (SDVKPLPSPDTDVPLSSVEIENPETSDQ) is disordered. S137 and S147 each carry phosphoserine.

It belongs to the glycophorin-A family. In terms of assembly, homodimer. Component of the ankyrin-1 complex in the erythrocyte, composed of ANK1, RHCE, RHAG, SLC4A1, EPB42, GYPA, GYPB and AQP1. Interacts with SLC4A1; a GYPA monomer is bound at each end of the SLC4A1 dimer forming a heterotetramer.

It localises to the cell membrane. In terms of biological role, component of the ankyrin-1 complex, a multiprotein complex involved in the stability and shape of the erythrocyte membrane. Glycophorin A is the major intrinsic membrane protein of the erythrocyte. The N-terminal glycosylated segment, which lies outside the erythrocyte membrane, has MN blood group receptors. Appears to be important for the function of SLC4A1 and is required for high activity of SLC4A1. May be involved in translocation of SLC4A1 to the plasma membrane. The sequence is that of Glycophorin-A from Pan troglodytes (Chimpanzee).